We begin with the raw amino-acid sequence, 218 residues long: Glutathione S-transferase Mu 4 (218 aa).

Residues 1–88 (MPMTLGYWDI…YIARKHNLCG (88 aa)) enclose the GST N-terminal domain. Glutathione-binding positions include 7 to 8 (YW), 46 to 50 (WLSEK), 59 to 60 (NL), and 72 to 73 (QS). The region spanning 90 to 208 (TEEEKIRVDI…KTSRFLRTPL (119 aa)) is the GST C-terminal domain. Residue tyrosine 116 coordinates substrate.

The protein belongs to the GST superfamily. Mu family. As to quaternary structure, homodimer. Widely expressed.

The protein resides in the cytoplasm. The catalysed reaction is RX + glutathione = an S-substituted glutathione + a halide anion + H(+). It carries out the reaction 1-chloro-2,4-dinitrobenzene + glutathione = 2,4-dinitrophenyl-S-glutathione + chloride + H(+). The enzyme catalyses (13S,14S)-epoxy-(4Z,7Z,9E,11E,16Z,19Z)-docosahexaenoate + glutathione = (13R)-S-glutathionyl-(14S)-hydroxy-(4Z,7Z,9E,11E,16Z,19Z)-docosahexaenoate. It catalyses the reaction leukotriene C4 = leukotriene A4 + glutathione. Functionally, conjugation of reduced glutathione to a wide number of exogenous and endogenous hydrophobic electrophiles. Catalyzes the conjugation of leukotriene A4 with reduced glutathione (GSH) to form leukotriene C4. Can also catalyze the transfer of a glutathionyl group from glutathione (GSH) to 13(S),14(S)-epoxy-docosahexaenoic acid to form maresin conjugate in tissue regeneration 1 (MCTR1), a bioactive lipid mediator that possess potent anti-inflammatory and proresolving actions. The polypeptide is Glutathione S-transferase Mu 4 (Mus musculus (Mouse)).